A 364-amino-acid chain; its full sequence is Mannose-1-phosphate guanyltransferase (364 aa).

Belongs to the transferase hexapeptide repeat family.

Its subcellular location is the cytoplasm. The catalysed reaction is alpha-D-mannose 1-phosphate + GTP + H(+) = GDP-alpha-D-mannose + diphosphate. It functions in the pathway nucleotide-sugar biosynthesis; GDP-alpha-D-mannose biosynthesis; GDP-alpha-D-mannose from alpha-D-mannose 1-phosphate (GTP route): step 1/1. Functionally, involved in cell wall synthesis where it is required for glycosylation. Involved in cell cycle progression through cell-size checkpoint. In Aspergillus oryzae (strain ATCC 42149 / RIB 40) (Yellow koji mold), this protein is Mannose-1-phosphate guanyltransferase (mpg1).